A 551-amino-acid chain; its full sequence is Arginine--tRNA ligase (551 aa).

The 'HIGH' region signature appears at alanine 125 to histidine 135.

It belongs to the class-I aminoacyl-tRNA synthetase family. As to quaternary structure, monomer.

It localises to the cytoplasm. The catalysed reaction is tRNA(Arg) + L-arginine + ATP = L-arginyl-tRNA(Arg) + AMP + diphosphate. The polypeptide is Arginine--tRNA ligase (Oleidesulfovibrio alaskensis (strain ATCC BAA-1058 / DSM 17464 / G20) (Desulfovibrio alaskensis)).